Consider the following 78-residue polypeptide: Myrmicitoxin-Ta2a (78 aa).

An N-terminal signal peptide occupies residues 1–26 (MKLSFLSLALAIIFVTVLIYAPQAEA). Positions 27 to 56 (KALADAVADADADADAAADAVADALADADA) are excised as a propeptide. A Lysine amide modification is found at Lys77.

It belongs to the formicidae venom precursor-01 superfamily. As to expression, expressed by the venom gland.

It is found in the secreted. Its function is as follows. Peptide with toxicity towards insects that may also act as antimicrobial peptide. Causes calcium influx in F11 cells (EC(50)=5.8 nM), possibly by modulating sodium channels (Nav). In vivo, is lethal to insects, but does not show toxicity to vertebrates. Intraplantar injection into mice does not induce spontaneous nocifensive behaviors up to a dose of 200 pmol. This Tetramorium africanum (Fierce ant) protein is Myrmicitoxin-Ta2a.